Consider the following 154-residue polypeptide: Endoribonuclease YbeY (154 aa).

Residues His-113, His-117, and His-123 each contribute to the Zn(2+) site.

The protein belongs to the endoribonuclease YbeY family. Zn(2+) serves as cofactor.

The protein resides in the cytoplasm. Functionally, single strand-specific metallo-endoribonuclease involved in late-stage 70S ribosome quality control and in maturation of the 3' terminus of the 16S rRNA. The polypeptide is Endoribonuclease YbeY (Verminephrobacter eiseniae (strain EF01-2)).